The chain runs to 413 residues: Variant surface glycoprotein YnAT 1.3 (413 aa).

The signal sequence occupies residues 1 to 22 (MLDNSRARSIVHLLILLKAHVI). 3 N-linked (GlcNAc...) asparagine glycosylation sites follow: Asn91, Asn361, and Asn379. Asn379 carries GPI-anchor amidated asparagine lipidation. The propeptide at 380–413 (SSNPTSRQNSVVQEPTTVSAAAITPLILPWTLLI) is removed in mature form.

It is found in the cell membrane. In terms of biological role, VSG forms a coat on the surface of the parasite. The trypanosome evades the immune response of the host by expressing a series of antigenically distinct VSGs from an estimated 1000 VSG genes. The chain is Variant surface glycoprotein YnAT 1.3 from Trypanosoma congolense.